The sequence spans 444 residues: ATP-dependent protease ATPase subunit HslU (444 aa).

ATP is bound by residues V18, 60-65 (GVGKTE), D258, E323, and R395.

It belongs to the ClpX chaperone family. HslU subfamily. In terms of assembly, a double ring-shaped homohexamer of HslV is capped on each side by a ring-shaped HslU homohexamer. The assembly of the HslU/HslV complex is dependent on binding of ATP.

The protein localises to the cytoplasm. Functionally, ATPase subunit of a proteasome-like degradation complex; this subunit has chaperone activity. The binding of ATP and its subsequent hydrolysis by HslU are essential for unfolding of protein substrates subsequently hydrolyzed by HslV. HslU recognizes the N-terminal part of its protein substrates and unfolds these before they are guided to HslV for hydrolysis. The chain is ATP-dependent protease ATPase subunit HslU from Thioalkalivibrio sulfidiphilus (strain HL-EbGR7).